The sequence spans 118 residues: Cycloviolacin-O8 (118 aa).

The signal sequence occupies residues 1–22 (MEMKNMVVGLFLIAAFALPALA). Positions 23–84 (TNFEKDFITH…THSNSINALG (62 aa)) are excised as a propeptide. Residues 85 to 115 (GTLPCGESCVWIPCISSVVGCSCKSKVCYKN) constitute a cross-link (cyclopeptide (Gly-Asn)). 3 disulfide bridges follow: Cys-89–Cys-105, Cys-93–Cys-107, and Cys-98–Cys-112. The propeptide occupies 116-118 (SLA).

Post-translationally, cycloviolacin-O8 is a cyclic peptide. In terms of tissue distribution, expressed in leaves, petals, petioles and roots but not in runners (at protein level).

Probably participates in a plant defense mechanism. The polypeptide is Cycloviolacin-O8 (Voc1) (Viola odorata (Sweet violet)).